A 340-amino-acid chain; its full sequence is DNA-directed RNA polymerase subunit alpha (340 aa).

The interval methionine 1 to asparagine 226 is alpha N-terminal domain (alpha-NTD). Residues leucine 243–tyrosine 340 form an alpha C-terminal domain (alpha-CTD) region.

This sequence belongs to the RNA polymerase alpha chain family. In terms of assembly, homodimer. The RNAP catalytic core consists of 2 alpha, 1 beta, 1 beta' and 1 omega subunit. When a sigma factor is associated with the core the holoenzyme is formed, which can initiate transcription. In terms of processing, the last 19 amino acids in the C-terminal part are cleaved in the spore.

The catalysed reaction is RNA(n) + a ribonucleoside 5'-triphosphate = RNA(n+1) + diphosphate. Functionally, DNA-dependent RNA polymerase catalyzes the transcription of DNA into RNA using the four ribonucleoside triphosphates as substrates. The protein is DNA-directed RNA polymerase subunit alpha of Streptomyces granaticolor.